We begin with the raw amino-acid sequence, 83 residues long: Omega-agatoxin-Aa4b (83 aa).

The first 20 residues, 1–20 (MKLCMTLLITAIAVVTFVVA), serve as a signal peptide directing secretion. A propeptide spanning residues 21–35 (TQEESAEFNEVEESR) is cleaved from the precursor. Disulfide bonds link Cys39–Cys55, Cys47–Cys60, Cys54–Cys71, and Cys62–Cys69. Position 81 is a D-serine (Ser) (Ser81).

This sequence belongs to the neurotoxin 02 (plectoxin) family. 03 (omega-agtx) subfamily. In terms of processing, the toxin with D-Ser (named omega-aga IVC) is 80-90 fold more potent than that with L-Ser (omega-aga IVB) against Cav2.1/CACNA1A (P-type) channels in rat cerebellar Purkinje neurons and is more resistant to proteases. The epimerization is done by the venom peptide isomerase heterodimer. As to expression, expressed by the venom gland.

The protein localises to the secreted. In terms of biological role, antagonist of voltage-gated Cav2.1/CACNA1A (P-type) calcium channels. Paralyzes insect by blocking neuromuscular transmission. The polypeptide is Omega-agatoxin-Aa4b (Agelenopsis aperta (North American funnel-web spider)).